A 321-amino-acid polypeptide reads, in one-letter code: Ferredoxin--NADP reductase (321 aa).

FAD contacts are provided by aspartate 34, glutamine 42, tyrosine 47, valine 87, phenylalanine 119, aspartate 278, and threonine 319.

It belongs to the ferredoxin--NADP reductase type 2 family. In terms of assembly, homodimer. Requires FAD as cofactor.

It catalyses the reaction 2 reduced [2Fe-2S]-[ferredoxin] + NADP(+) + H(+) = 2 oxidized [2Fe-2S]-[ferredoxin] + NADPH. The chain is Ferredoxin--NADP reductase from Streptococcus pneumoniae serotype 4 (strain ATCC BAA-334 / TIGR4).